A 423-amino-acid polypeptide reads, in one-letter code: Zinc finger and BTB domain-containing protein 6 (423 aa).

The 65-residue stretch at 33 to 97 folds into the BTB domain; it reads CDVSIYINDT…CYTGALEVKR (65 aa). Residue Ser201 is modified to Phosphoserine. 4 consecutive C2H2-type zinc fingers follow at residues 300-322, 325-347, 353-375, and 381-404; these read HQCPRCPRGFLHVENYLRHLKMH, FLCLQCGKTFTQKKNLNRHIRGH, FQCTVCLKTFTAKSTLQDHLNIH, and YKCHCCDMDFKHKSALKKHLTSVH.

The protein localises to the nucleus. Functionally, may be involved in transcriptional regulation. This is Zinc finger and BTB domain-containing protein 6 (Zbtb6) from Mus musculus (Mouse).